We begin with the raw amino-acid sequence, 690 residues long: F-box/LRR-repeat protein 5 (690 aa).

Positions 1 to 159 (MAPFPDEVDV…IKKKVIAQHC (159 aa)) are hemerythrin-like. Fe(3+)-binding residues include H15, H57, E58, E61, H80, H126, and E130. An F-box domain is found at 202–248 (STGITHLPPEVMLSIFSYLNPQELCRCSQVSTKWSQLAKTGSLWKHL). 7 LRR repeats span residues 340–364 (SSAV…LDLT), 365–392 (QTDI…DLSG), 393–418 (CEKI…QSGF), 478–507 (VWML…CVME), 575–606 (TTLP…SLSG), 607–634 (CYQI…NLSG), and 635–660 (CLTV…YFYY). The [2Fe-2S] cluster site is built by C661, C675, C685, and C686.

Part of a SCF (SKP1-cullin-F-box) protein ligase complex. Interacts with ACO1/IRP1, IREB2/IRP2; the interaction depends on the [2Fe-2S] cluster. Interacts with DCTN1/p150-glued. [2Fe-2S] cluster is required as a cofactor. Post-translationally, polybiquitinated upon iron and oxygen depletion, leading to its degradation by the proteasome. Ubiquitination is regulated by the hemerythrin-like region that acts as an oxygen and iron sensor. Undergoes constitutive ubiquitin-dependent degradation at the steady state by HERC2. As to expression, ubiquitously expressed. Highly expressed in early embryogenesis with expression decreasing as the embryo progresses through development (E11 and E15).

The protein localises to the cytoplasm. Its subcellular location is the perinuclear region. It is found in the nucleus. The protein operates within protein modification; protein ubiquitination. With respect to regulation, an iron-sulfur cluster promotes IRP2 polyubiquitination and degradation in response to both iron and oxygen concentrations. Its function is as follows. Component of some SCF (SKP1-cullin-F-box) protein ligase complex that plays a central role in iron homeostasis by promoting the ubiquitination and subsequent degradation of IREB2/IRP2. The C-terminal domain of FBXL5 contains a redox-sensitive [2Fe-2S] cluster that, upon oxidation, promotes binding to IRP2 to effect its oxygen-dependent degradation. Under iron deficiency conditions, the N-terminal hemerythrin-like (Hr) region, which contains a diiron metal center, cannot bind iron and undergoes conformational changes that destabilize the FBXL5 protein and cause its ubiquitination and degradation. When intracellular iron levels start rising, the Hr region is stabilized. Additional increases in iron levels facilitate the assembly and incorporation of a redox active [2Fe-2S] cluster in the C-terminal domain. Only when oxygen level is high enough to maintain the cluster in its oxidized state can FBXL5 recruit IRP2 as a substrate for polyubiquination and degradation. Promotes ubiquitination and subsequent degradation of the dynactin complex component DCTN1. Within the nucleus, promotes the ubiquitination of SNAI1; preventing its interaction with DNA and promoting its degradation. Negatively regulates DNA damage response by mediating the ubiquitin-proteasome degradation of the DNA repair protein NABP2. The sequence is that of F-box/LRR-repeat protein 5 (Fbxl5) from Mus musculus (Mouse).